The chain runs to 375 residues: Phytanoyl-CoA hydroxylase-interacting protein-like (375 aa).

Ser11, Ser12, and Ser15 each carry phosphoserine. A glycan (N-linked (GlcNAc...) asparagine) is linked at Asn22. Ser24 carries the phosphoserine modification. Asn36 is a glycosylation site (N-linked (GlcNAc...) asparagine). The 110-residue stretch at 51-160 folds into the Fibronectin type-III domain; sequence VPHNIKINNI…EIIEFCTADY (110 aa).

The protein belongs to the PHYHIP family.

May play a role in the development of the central system. The sequence is that of Phytanoyl-CoA hydroxylase-interacting protein-like (Phyhipl) from Rattus norvegicus (Rat).